Here is an 87-residue protein sequence, read N- to C-terminus: Small ribosomal subunit protein bS20 (87 aa).

A disordered region spans residues 1–23 (MANHKSAIKRHKQSVKRAARNRA).

The protein belongs to the bacterial ribosomal protein bS20 family.

Its function is as follows. Binds directly to 16S ribosomal RNA. This chain is Small ribosomal subunit protein bS20, found in Oleidesulfovibrio alaskensis (strain ATCC BAA-1058 / DSM 17464 / G20) (Desulfovibrio alaskensis).